The sequence spans 157 residues: Small ribosomal subunit protein uS7 (157 aa).

This sequence belongs to the universal ribosomal protein uS7 family. Part of the 30S ribosomal subunit. Contacts proteins S9 and S11.

Its function is as follows. One of the primary rRNA binding proteins, it binds directly to 16S rRNA where it nucleates assembly of the head domain of the 30S subunit. Is located at the subunit interface close to the decoding center, probably blocks exit of the E-site tRNA. This Borreliella afzelii (strain PKo) (Borrelia afzelii) protein is Small ribosomal subunit protein uS7.